The following is a 177-amino-acid chain: ATP-dependent protease subunit HslV (177 aa).

Thr-7 is an active-site residue. Positions 162, 165, and 168 each coordinate Na(+).

It belongs to the peptidase T1B family. HslV subfamily. In terms of assembly, a double ring-shaped homohexamer of HslV is capped on each side by a ring-shaped HslU homohexamer. The assembly of the HslU/HslV complex is dependent on binding of ATP.

The protein localises to the cytoplasm. The catalysed reaction is ATP-dependent cleavage of peptide bonds with broad specificity.. With respect to regulation, allosterically activated by HslU binding. Protease subunit of a proteasome-like degradation complex believed to be a general protein degrading machinery. This is ATP-dependent protease subunit HslV from Persephonella marina (strain DSM 14350 / EX-H1).